We begin with the raw amino-acid sequence, 208 residues long: Cytidylate kinase (208 aa).

ATP is bound at residue 9 to 17 (GPSASGKSS).

It belongs to the cytidylate kinase family. Type 1 subfamily.

The protein localises to the cytoplasm. It catalyses the reaction CMP + ATP = CDP + ADP. The catalysed reaction is dCMP + ATP = dCDP + ADP. The sequence is that of Cytidylate kinase from Thermus thermophilus (strain ATCC BAA-163 / DSM 7039 / HB27).